Reading from the N-terminus, the 362-residue chain is MNNTIQNSTITDDLKYVMTLDKLTEYLSCLICLPGALCNAILIYLIWKRTPIQMRSYAIYILNFALFDFATCIISFFSCQQVIFSDFSLVYIFHGPCKYVSPWFCYFCHCFMCHALAHSQWILLGSFIYRYRVLTGETPTAKDLIRNSVALYSMSLCFLLVYVFDNSDSDLLFQILTRVHPEYHYDDESIWKKSIVVSGNISAFAPITLISILYMTIPCVPIYCAILYFRHNTRVILNNPHINLSPTAKSNHVKLIRALTVQAGIPIFWLVASGIFTMSQFGIIGGPIPENITFRLMDCIPLISPIVTIIFVQPYREGLLKVLLKNSGLFVPNIIGSSIVDQTVAVTSVFGPKVTAFVQTQL.

Helical transmembrane passes span 27 to 47 (LSCL…YLIW), 57 to 77 (YAIY…ISFF), 104 to 124 (FCYF…WILL), 144 to 164 (LIRN…VYVF), 209 to 229 (LISI…ILYF), 264 to 284 (GIPI…FGII), and 292 to 312 (ITFR…IIFV).

Belongs to the nematode receptor-like protein srd family.

The protein localises to the membrane. Functionally, thought to be a chemosensory receptor. The polypeptide is Serpentine receptor class delta-2 (srd-2) (Caenorhabditis elegans).